The chain runs to 74 residues: Conotoxin AbVII (74 aa).

The first 17 residues, 1 to 17 (VLIIAVLFLTACQLTTA), serve as a signal peptide directing secretion. Positions 18–40 (ETSSRGKQKHRALRSTDKNSRMT) are excised as a propeptide. The segment at 19 to 41 (TSSRGKQKHRALRSTDKNSRMTK) is disordered. 3 cysteine pairs are disulfide-bonded: cysteine 43/cysteine 57, cysteine 50/cysteine 61, and cysteine 56/cysteine 68.

It belongs to the conotoxin O1 superfamily. In terms of tissue distribution, expressed by the venom duct.

It localises to the secreted. The protein is Conotoxin AbVII of Conus abbreviatus (Abbreviated cone).